The sequence spans 167 residues: Large ribosomal subunit protein uL10 (167 aa).

The protein belongs to the universal ribosomal protein uL10 family. In terms of assembly, part of the ribosomal stalk of the 50S ribosomal subunit. The N-terminus interacts with L11 and the large rRNA to form the base of the stalk. The C-terminus forms an elongated spine to which L12 dimers bind in a sequential fashion forming a multimeric L10(L12)X complex.

Its function is as follows. Forms part of the ribosomal stalk, playing a central role in the interaction of the ribosome with GTP-bound translation factors. This Alkaliphilus oremlandii (strain OhILAs) (Clostridium oremlandii (strain OhILAs)) protein is Large ribosomal subunit protein uL10.